The chain runs to 457 residues: Transcription factor CP2-like protein 1 (457 aa).

A mediate transcriptional repression region spans residues 1–52; it reads MLFWHTQPEHYNQHNSGSYLRDVLALPIFKQEEPQLSPENEARLPPLQYVLC. The Grh/CP2 DB domain occupies 43–280; it reads RLPPLQYVLC…PSPSYNGSPN (238 aa). 2 disordered regions span residues 219 to 245 and 271 to 301; these read KPKG…KEKY and PSPS…LPVG. The span at 221 to 245 shows a compositional bias: basic and acidic residues; it reads KGADRKQETDREKMEKRTAQEKEKY. Positions 261-365 are SAM2-like domain; it reads PDVAYQVNSA…IRLFNAIKGR (105 aa). A compositionally biased stretch (polar residues) spans 271-281; the sequence is PSPSYNGSPNS.

It belongs to the grh/CP2 family. CP2 subfamily. Forms homohexamers via its SAM-like domain. Interacts with MTA1; which is indispensable for TFCP2L1-mediated self-renewal-promoting effect and endoderm-inhibiting action.

Its subcellular location is the nucleus. Functionally, transcription factor that facilitates establishment and maintenance of pluripotency in embryonic stem cells (ESCs). With KLF2, acts as the major effector of self-renewal that mediates induction of pluripotency downstream of LIF/STAT3 and Wnt/beta-catenin signaling. Required for normal duct development in the salivary gland and kidney. Coordinates the development of the kidney collecting ducts intercalated (IC) and principal (PC) cells, which regulate acid-base and salt-water homeostasis, respectively. Regulates the expression of IC genes including subunits B1 and D2 of the V-ATPase complex, OXGR1, CA12, SLC4A1, AQP6 and IC-specific transcription factor FOXI1. Also regulates the expression of JAG1 and subsequent notch signaling in the collecting duct. JAG1 initiates notch signaling in PCs but inhibits notch signaling in ICs. Acts as a transcriptional suppressor that may suppress UBP1-mediated transcriptional activation. Modulates the placental expression of CYP11A1. The sequence is that of Transcription factor CP2-like protein 1 (TFCP2L1) from Pongo abelii (Sumatran orangutan).